Here is a 212-residue protein sequence, read N- to C-terminus: Fucoxanthin-chlorophyll a-c binding protein E, chloroplastic (212 aa).

The transit peptide at 1 to 34 (MAIACAAAPGLRGAEPFNGAALATSAKSSSAMKM) directs the protein to the chloroplast. The next 3 helical transmembrane spans lie at 76–96 (IAML…PGML), 117–137 (IPPL…LFVV), and 178–198 (GRAA…SNQP).

This sequence belongs to the fucoxanthin chlorophyll protein family. As to quaternary structure, the LHC complex of chromophytic algae is composed of fucoxanthin, chlorophyll A and C bound non-covalently by fucoxanthin chlorophyll proteins (FCPs). The ratio of pigments in this LHC is; fucoxanthin: chlorophyll C: chlorophyll A; (0.6-1): (0.1-0.3): (1).

It is found in the plastid. The protein localises to the chloroplast thylakoid membrane. Its function is as follows. The light-harvesting complex (LHC) functions as a light receptor, it captures and delivers excitation energy to photosystems with which it is closely associated. Energy is transferred from the carotenoid and chlorophyll C (or B) to chlorophyll A and the photosynthetic reaction centers where it is used to synthesize ATP and reducing power. In Macrocystis pyrifera (Giant kelp), this protein is Fucoxanthin-chlorophyll a-c binding protein E, chloroplastic (FCPE).